A 103-amino-acid polypeptide reads, in one-letter code: Histone H4.2 (103 aa).

The segment covering 1–14 has biased composition (gly residues); it reads MTGRGKGGKGLGKG. Positions 1-20 are disordered; it reads MTGRGKGGKGLGKGGAKRHR. Residue Lys6 is modified to N6-acetyl-N6-methyllysine; alternate. 3 positions are modified to N6-methyllysine; alternate: Lys6, Lys9, and Lys13. An N6-acetyl-N6-methyllysine; alternate modification is found at Lys13. Residues 17-21 mediate DNA binding; that stretch reads KRHRK. Lys92 carries the post-translational modification N6-glutaryllysine.

Belongs to the histone H4 family. As to quaternary structure, the nucleosome is a histone octamer containing two molecules each of H2A, H2B, H3 and H4 assembled in one H3-H4 heterotetramer and two H2A-H2B heterodimers. The octamer wraps approximately 147 bp of DNA. Glutarylation at Lys-92 (H4K91glu) destabilizes nucleosomes by promoting dissociation of the H2A-H2B dimers from nucleosomes.

The protein localises to the nucleus. It is found in the chromosome. Core component of nucleosome. Nucleosomes wrap and compact DNA into chromatin, limiting DNA accessibility to the cellular machineries which require DNA as a template. Histones thereby play a central role in transcription regulation, DNA repair, DNA replication and chromosomal stability. DNA accessibility is regulated via a complex set of post-translational modifications of histones, also called histone code, and nucleosome remodeling. The chain is Histone H4.2 (H4.2) from Talaromyces funiculosus (Fruitlet core rot fungus).